The chain runs to 21 residues: Formate ester dehydrogenase beta chain (21 aa).

In terms of assembly, heterotrimer composed of an alpha, a beta and a gamma chain.

The protein is Formate ester dehydrogenase beta chain of Amycolatopsis methanolica.